Consider the following 203-residue polypeptide: Glutathione S-transferase (203 aa).

Residues 2–79 (PDYKVYYFNV…YLANQVGLAG (78 aa)) form the GST N-terminal domain. Glutathione is bound by residues Y8, W39, K43, 49-51 (GQM), and 63-64 (QS). A GST C-terminal domain is found at 81–203 (DDWENLMIDT…YIAKRPITEV (123 aa)).

The protein belongs to the GST superfamily. Sigma family. Homodimer.

It catalyses the reaction RX + glutathione = an S-substituted glutathione + a halide anion + H(+). In terms of biological role, conjugation of reduced glutathione to a wide number of exogenous and endogenous hydrophobic electrophiles. The polypeptide is Glutathione S-transferase (GstS1) (Anopheles gambiae (African malaria mosquito)).